An 873-amino-acid chain; its full sequence is Potassium voltage-gated channel subfamily KQT member 3 (873 aa).

A disordered region spans residues 1–41 (MGLKARRAAGAAGGGGGEGGGGGGGAANPAGGDSAVAGDEE). The Cytoplasmic portion of the chain corresponds to 1–121 (MGLKARRAAG…IYDALERPRG (121 aa)). The segment covering 11–26 (AAGGGGGEGGGGGGGA) has biased composition (gly residues). A Phosphothreonine modification is found at Thr82. The helical transmembrane segment at 122 to 144 (WALLYHALVFLIVLGCLILAVLT) threads the bilayer. Residues 145–154 (TFKEYETVSG) are Extracellular-facing. The helical transmembrane segment at 155–176 (DWLLLLETFAIFIFGAEFALRI) threads the bilayer. Over 177–194 (WAAGCCCRYKGWRGRLKF) the chain is Cytoplasmic. A helical transmembrane segment spans residues 195-214 (ARKPLCMLDIFVLIASVPVV). Residues 215 to 226 (AVGNQGNVLATS) lie on the Extracellular side of the membrane. The chain crosses the membrane as a helical; Voltage-sensor span at residues 227 to 245 (LRSLRFLQILRMLRMDRRG). Residue Arg244 participates in a 1,2-diacyl-sn-glycero-3-phospho-(1D-myo-inositol-4,5-bisphosphate) binding. Residues 246 to 257 (GTWKLLGSAICA) lie on the Cytoplasmic side of the membrane. Residues 258–283 (HSKELITAWYIGFLTLILSSFLVYLV) traverse the membrane as a helical segment. Lys260 lines the a 1,2-diacyl-sn-glycero-3-phospho-(1D-myo-inositol-4,5-bisphosphate) pocket. At 284-303 (EKDVPEMDAQGEEMKEEFET) the chain is on the extracellular side. Positions 304–316 (YADALWWGLITLA) form an intramembrane region, pore-forming. The short motif at 317 to 322 (TIGYGD) is the Selectivity filter element. Topologically, residues 317 to 327 (TIGYGDKTPKT) are extracellular. The helical transmembrane segment at 328-354 (WEGRLIAATFSLIGVSFFALPAGILGS) threads the bilayer. Over 355–873 (GLALKVQEQH…SIWTPSNKPT (519 aa)) the chain is Cytoplasmic. The interval 357-538 (ALKVQEQHRQ…RLYKKKFKET (182 aa)) is mediates interaction with calmodulin. Position 367 (Lys367) interacts with a 1,2-diacyl-sn-glycero-3-phospho-(1D-myo-inositol-4,5-bisphosphate). 3 disordered regions span residues 575–603 (PGPP…PRNE), 723–742 (RGGP…GSTY), and 766–873 (ELQG…NKPT). 3 stretches are compositionally biased toward polar residues: residues 588–601 (KGSA…QSPR), 725–741 (GPSS…SGST), and 844–873 (DPFT…NKPT).

The protein belongs to the potassium channel family. KQT (TC 1.A.1.15) subfamily. Kv7.3/KCNQ3 sub-subfamily. As to quaternary structure, heterotetramer with KCNQ2; forms heterotetrameric M-channel responsible for the native M-current. Interacts with calmodulin; the interaction is calcium-independent, constitutive and participates in the proper assembly of a functional M-channel. Heteromultimer with KCNQ5. May associate with KCNE2. Interacts with IQCJ-SCHIP1. Interacts (via the pore module) with SLC5A3/SMIT1; forms a coregulatory complex that alters ion selectivity, voltage dependence and gating kinetics of the channel. In terms of processing, KCNQ2/KCNQ3 are ubiquitinated by NEDD4L. Ubiquitination leads to protein degradation. Degradation induced by NEDD4L is inhibited by USP36. In terms of tissue distribution, expressed in brain and sympathetic ganglia. In brain, expressed in cortex, hippocampus and at much lower levels in cerebellum. In sympathetic ganglia, expressed at approximately equal levels in both superior cervical ganglia and prevertebral ganglia.

It is found in the cell membrane. The enzyme catalyses K(+)(in) = K(+)(out). It carries out the reaction Rb(+)(in) = Rb(+)(out). The catalysed reaction is Cs(+)(in) = Cs(+)(out). It catalyses the reaction Na(+)(in) = Na(+)(out). Phosphatidylinositol-4,5-bisphosphate (PIP2) potentiates the activation of KCNQ channels by enhancing the electro-mechanical coupling of the voltage-sensing domain (VSD) and the pore-forming domain (PD). In the closed state of the channel, PIP2 is anchored at the S2-S3 loop; upon channel activation, PIP2 interacts with the S4-S5 linker and is involved in channel gating. Calcium suppresses KCNQ2-KCNQ3 channel currents, with calcium-bound calmodulin inducing a change in channel configuration which leads to the reduction of channel affinity for PIP2 and subsequent current suppression. M-channel is blocked by XE991. Pore-forming subunit of the voltage-gated potassium (Kv) M-channel which is responsible for the M-current, a key controller of neuronal excitability. M-channel is composed of pore-forming subunits KCNQ2 and KCNQ3 assembled as heterotetramers, each subunit containing a voltage sensing domain (VSD) and a pore-forming domain (PD). The native M-current has a slowly activating and deactivating potassium conductance which plays a critical role in determining the subthreshold electrical excitability of neurons as well as the responsiveness to synaptic inputs. M-channel is selectively permeable in vitro to other cations besides potassium, in decreasing order of affinity K(+) &gt; Rb(+) &gt; Cs(+) &gt; Na(+). M-channel association with SLC5A3/SMIT1 alters channel ion selectivity, increasing Na(+) and Cs(+) permeation relative to K(+). Suppressed by activation of M1 muscarinic acetylcholine receptors. KCNQ3 also associates with KCNQ5 to form a functional channel in vitro and may also contribute to the M-current in brain. The protein is Potassium voltage-gated channel subfamily KQT member 3 of Rattus norvegicus (Rat).